Reading from the N-terminus, the 503-residue chain is Maturase K (503 aa).

Belongs to the intron maturase 2 family. MatK subfamily.

Its subcellular location is the plastid. It localises to the chloroplast. In terms of biological role, usually encoded in the trnK tRNA gene intron. Probably assists in splicing its own and other chloroplast group II introns. The protein is Maturase K of Rosa acicularis (Prickly rose).